The primary structure comprises 274 residues: Formamidopyrimidine-DNA glycosylase (274 aa).

The active-site Schiff-base intermediate with DNA is the proline 2. Glutamate 3 serves as the catalytic Proton donor. The Proton donor; for beta-elimination activity role is filled by lysine 56. DNA contacts are provided by histidine 89, arginine 107, and lysine 148. The FPG-type zinc-finger motif lies at 233 to 267 (LAYGRAREMCVNCETTLENLKLGQRASVFCPQCQP). Arginine 257 (proton donor; for delta-elimination activity) is an active-site residue.

The protein belongs to the FPG family. As to quaternary structure, monomer. Zn(2+) is required as a cofactor.

The catalysed reaction is Hydrolysis of DNA containing ring-opened 7-methylguanine residues, releasing 2,6-diamino-4-hydroxy-5-(N-methyl)formamidopyrimidine.. The enzyme catalyses 2'-deoxyribonucleotide-(2'-deoxyribose 5'-phosphate)-2'-deoxyribonucleotide-DNA = a 3'-end 2'-deoxyribonucleotide-(2,3-dehydro-2,3-deoxyribose 5'-phosphate)-DNA + a 5'-end 5'-phospho-2'-deoxyribonucleoside-DNA + H(+). Functionally, involved in base excision repair of DNA damaged by oxidation or by mutagenic agents. Acts as a DNA glycosylase that recognizes and removes damaged bases. Has a preference for oxidized purines, such as 7,8-dihydro-8-oxoguanine (8-oxoG). Has AP (apurinic/apyrimidinic) lyase activity and introduces nicks in the DNA strand. Cleaves the DNA backbone by beta-delta elimination to generate a single-strand break at the site of the removed base with both 3'- and 5'-phosphates. This chain is Formamidopyrimidine-DNA glycosylase, found in Acinetobacter baumannii (strain SDF).